We begin with the raw amino-acid sequence, 725 residues long: 1,4-alpha-glucan branching enzyme GlgB (725 aa).

Asp406 acts as the Nucleophile in catalysis. Glu459 serves as the catalytic Proton donor.

The protein belongs to the glycosyl hydrolase 13 family. GlgB subfamily. In terms of assembly, monomer.

The catalysed reaction is Transfers a segment of a (1-&gt;4)-alpha-D-glucan chain to a primary hydroxy group in a similar glucan chain.. The protein operates within glycan biosynthesis; glycogen biosynthesis. In terms of biological role, catalyzes the formation of the alpha-1,6-glucosidic linkages in glycogen by scission of a 1,4-alpha-linked oligosaccharide from growing alpha-1,4-glucan chains and the subsequent attachment of the oligosaccharide to the alpha-1,6 position. The chain is 1,4-alpha-glucan branching enzyme GlgB from Methylobacillus flagellatus (strain ATCC 51484 / DSM 6875 / VKM B-1610 / KT).